A 403-amino-acid polypeptide reads, in one-letter code: NADH-quinone oxidoreductase subunit D (403 aa).

It belongs to the complex I 49 kDa subunit family. As to quaternary structure, NDH-1 is composed of 15 different subunits. Subunits NuoB, C, D, E, F, and G constitute the peripheral sector of the complex.

The protein resides in the cell membrane. It carries out the reaction a quinone + NADH + 5 H(+)(in) = a quinol + NAD(+) + 4 H(+)(out). Functionally, NDH-1 shuttles electrons from NADH, via FMN and iron-sulfur (Fe-S) centers, to quinones in the respiratory chain. The immediate electron acceptor for the enzyme in this species is believed to be a menaquinone. Couples the redox reaction to proton translocation (for every two electrons transferred, four hydrogen ions are translocated across the cytoplasmic membrane), and thus conserves the redox energy in a proton gradient. The polypeptide is NADH-quinone oxidoreductase subunit D (Deinococcus geothermalis (strain DSM 11300 / CIP 105573 / AG-3a)).